We begin with the raw amino-acid sequence, 248 residues long: MNILSCSINTFKELLYDISGVEVGQHFYWQIGGFQVHGQVLITSWVVIAILLGSSILAVRNPQTIPTDVQNFFEYVLEFIRDVSKTQIGEEYGPWVPFIGTLFLFIFVSNWSGALFPWKIIQLPQGELAAPTNDINTTVALALLTSVAYFYAGLTKKGLAYFNKYIQPTPILLPINILEDFTKPLSLSFRLFGNILADELVVVVLLSLVPLVVPIPVMFLGLFTSGIQALIFATLAAAYIGESMEGHH.

The next 5 membrane-spanning stretches (helical) occupy residues 39-59 (QVLI…ILAV), 96-116 (VPFI…GALF), 135-155 (INTT…AGLT), 200-220 (LVVV…VMFL), and 221-241 (GLFT…AYIG).

It belongs to the ATPase A chain family. F-type ATPases have 2 components, CF(1) - the catalytic core - and CF(0) - the membrane proton channel. CF(1) has five subunits: alpha(3), beta(3), gamma(1), delta(1), epsilon(1). CF(0) has four main subunits: a, b, b' and c.

The protein localises to the plastid. It is found in the chloroplast thylakoid membrane. In terms of biological role, key component of the proton channel; it plays a direct role in the translocation of protons across the membrane. The chain is ATP synthase subunit a, chloroplastic from Pelargonium hortorum (Common geranium).